The sequence spans 53 residues: ATP synthase protein 8 (53 aa).

Residues 6–26 (PIGWLSLFIIFSLTFILFSMM) form a helical membrane-spanning segment.

This sequence belongs to the ATPase protein 8 family. F-type ATPases have 2 components, CF(1) - the catalytic core - and CF(0) - the membrane proton channel.

It is found in the mitochondrion membrane. Its function is as follows. Mitochondrial membrane ATP synthase (F(1)F(0) ATP synthase or Complex V) produces ATP from ADP in the presence of a proton gradient across the membrane which is generated by electron transport complexes of the respiratory chain. F-type ATPases consist of two structural domains, F(1) - containing the extramembraneous catalytic core and F(0) - containing the membrane proton channel, linked together by a central stalk and a peripheral stalk. During catalysis, ATP synthesis in the catalytic domain of F(1) is coupled via a rotary mechanism of the central stalk subunits to proton translocation. Part of the complex F(0) domain. Minor subunit located with subunit a in the membrane. This Ceratitis capitata (Mediterranean fruit fly) protein is ATP synthase protein 8 (mt:ATPase8).